Reading from the N-terminus, the 299-residue chain is UDP-N-acetylenolpyruvoylglucosamine reductase (299 aa).

The FAD-binding PCMH-type domain occupies 28 to 193 (KVGGPADILA…LSAKFELQAG (166 aa)). Residue arginine 172 is part of the active site. The Proton donor role is filled by serine 222. Glutamate 292 is a catalytic residue.

Requires FAD as cofactor.

Its subcellular location is the cytoplasm. It catalyses the reaction UDP-N-acetyl-alpha-D-muramate + NADP(+) = UDP-N-acetyl-3-O-(1-carboxyvinyl)-alpha-D-glucosamine + NADPH + H(+). It participates in cell wall biogenesis; peptidoglycan biosynthesis. In terms of biological role, cell wall formation. The protein is UDP-N-acetylenolpyruvoylglucosamine reductase of Lactococcus lactis subsp. cremoris (strain MG1363).